Consider the following 1185-residue polypeptide: Adhesion G-protein coupled receptor G6 (1185 aa).

An N-terminal signal peptide occupies residues 1–32; the sequence is MISFISGRWWRWKFQNTLAVFLLLICLSTSVA. Topologically, residues 33 to 849 are extracellular; the sequence is QSCQSSTSCN…AELIDEKNNR (817 aa). Cysteines 41 and 67 form a disulfide. Residues 41 to 149 enclose the CUB domain; sequence CNVVLTDSQG…KGFHISYKQV (109 aa). Residues 41–354 are mediates interaction with type IV collagen; sequence CNVVLTDSQG…SSTQTDSTLS (314 aa). The tract at residues 41-839 is inhibits receptor signaling in absence of type IV collagen; the sequence is CNVVLTDSQG…FGILMDVSRA (799 aa). Asn-68 is a glycosylation site (N-linked (GlcNAc...) asparagine). Ca(2+)-binding residues include Glu-89 and Asp-97. The cysteines at positions 94 and 111 are disulfide-linked. A glycan (N-linked (GlcNAc...) asparagine) is linked at Asn-121. Residues Asp-134, Ser-136, and Val-137 each coordinate Ca(2+). The Pentraxin (PTX) domain maps to 154–355; sequence RNQKVTMPKS…STQTDSTLSC (202 aa). Cystine bridges form between Cys-185-Cys-248, Cys-229-Cys-271, and Cys-369-Cys-375. N-linked (GlcNAc...) asparagine glycans are attached at residues Asn-395, Asn-429, Asn-470, Asn-539, Asn-550, Asn-562, Asn-565, Asn-613, Asn-680, Asn-691, Asn-719, Asn-763, Asn-799, and Asn-818. Cystine bridges form between Cys-508–Cys-544 and Cys-532–Cys-563. The region spanning 658–840 is the GAIN-B domain; sequence PSLTISSKNL…GILMDVSRAA (183 aa). Disulfide bonds link Cys-790/Cys-822 and Cys-809/Cys-824. A GPS region spans residues 790–840; that stretch reads CVFWDFNLQNYSGGCNSDGCKVGSDSNSNRTVCLCNHLTHFGILMDVSRAA. Positions 829 to 837 are stachel; that stretch reads HFGILMDVS. A helical membrane pass occupies residues 850–870; it reads VLTFITYIGCGISAIFSAATL. At 871–886 the chain is on the cytoplasmic side; it reads LTYIAFEKLRRDYPSK. Residues 887 to 907 traverse the membrane as a helical segment; sequence ILMNLSTSLLFLNMVFLLDGW. The Extracellular portion of the chain corresponds to 908-915; that stretch reads LASYEIKE. Residues 916–936 form a helical membrane-spanning segment; the sequence is LCVTVAVFLHFFLLTSFTWMG. Residues 937–957 lie on the Cytoplasmic side of the membrane; sequence LESIHMYIALVKVFNTYIRRY. A helical transmembrane segment spans residues 958 to 978; sequence ILKFCIVGWGVPAAIVGIVLA. The Extracellular segment spans residues 979-1013; sequence VSKDSYGKNYYGKGKDGQGTSEFCWILNPVVFYVT. The helical transmembrane segment at 1014–1034 threads the bilayer; it reads CVAYFSIIFLMNVAMFIVVMI. Residues 1035-1057 are Cytoplasmic-facing; the sequence is QICGRNGKRSNRTLREDILRNLR. The helical transmembrane segment at 1058–1080 threads the bilayer; that stretch reads SVVSLTFLLGMTWGFAFFAWGPV. The Extracellular portion of the chain corresponds to 1081-1083; the sequence is SLA. A helical membrane pass occupies residues 1084–1106; that stretch reads FMYLFTIFNSLQGLFIFVFHCAL. Residue Asn-1092 coordinates 17alpha-hydroxyprogesterone. Topologically, residues 1107-1185 are cytoplasmic; that stretch reads KENVQKQWRR…RHSNADSTLQ (79 aa). A disordered region spans residues 1138–1160; that stretch reads NTKKVSSDNLGKSLSSSSFGSTT. The span at 1144-1158 shows a compositional bias: low complexity; sequence SDNLGKSLSSSSFGS.

Belongs to the G-protein coupled receptor 2 family. Adhesion G-protein coupled receptor (ADGR) subfamily. Post-translationally, autoproteolytically processed at the GPS region of the GAIN-B domain; this cleavage modulates receptor activity. Expressed in Schwann cells of the posterior lateral line nerve and in brain.

The protein resides in the cell membrane. Forms a heterodimer of 2 chains generated by proteolytic processing that remain associated through non-covalent interactions mediated by the GAIN-B domain. In the inactivated receptor, the Stachel sequence (also named stalk) is embedded in the GAIN-B domain, where it adopts a beta-strand conformation. On activation, the Stachel moves into the 7 transmembrane region and adopts a twisted hook-shaped configuration that forms contacts within the receptor, leading to coupling of a G-alpha protein, which activates signaling. The cleaved GAIN-B and N-terminal domains can then dissociate from the rest of the receptor. Adhesion G-protein coupled receptor (aGPCR) for steroid hormones, such as progesterone and 17alpha-hydroxyprogesterone (17OHP). Ligand binding causes a conformation change that triggers signaling via guanine nucleotide-binding proteins (G proteins) and modulates the activity of downstream effectors, such as adenylate cyclase. Adgrg6 is coupled to G(i) G alpha proteins and mediates inhibition of adenylate cyclase. Also able to couple to G(q) G proteins. Involved in myelination of the peripheral nervous system: required for differentiation of promyelinating Schwann cells and for normal myelination of axons. G-protein coupled receptor activity can also be activated by type IV collagen, a major constituent of the basement membrane. Also plays a role inner ear development. In Danio rerio (Zebrafish), this protein is Adhesion G-protein coupled receptor G6 (adgrg6).